The sequence spans 188 residues: MSSSSSSSSPVKSTGSPFIQSLKPRESLASMGSATQLVIKDIGEIHSRLLDHRPVIQGETRYFIKEFEEKRGLREMRVLENLRNSISETNEHALPKCTSVMQDQLASVLKKLETANHTIHRLQQRELENAKRSASKAGEEKMRAHWEPVMKEQEQKRQTVDEEHRKAVMRLKEQYVTMDKELSKQISF.

The tract at residues 1-24 (MSSSSSSSSPVKSTGSPFIQSLKP) is disordered. A compositionally biased stretch (polar residues) spans 10 to 19 (PVKSTGSPFI). A coiled-coil region spans residues 101 to 183 (MQDQLASVLK…QYVTMDKELS (83 aa)).

This sequence belongs to the BLOC1S5 family. In terms of assembly, component of the biogenesis of lysosome-related organelles complex 1 (BLOC-1).

Component of the BLOC-1 complex, a complex that is required for normal biogenesis of lysosome-related organelles (LRO), such as platelet dense granules and melanosomes. Plays a role in intracellular vesicle trafficking. This is Biogenesis of lysosome-related organelles complex 1 subunit 5 (bloc1s5) from Xenopus laevis (African clawed frog).